Consider the following 99-residue polypeptide: Aspartyl/glutamyl-tRNA(Asn/Gln) amidotransferase subunit C (99 aa).

It belongs to the GatC family. In terms of assembly, heterotrimer of A, B and C subunits.

The catalysed reaction is L-glutamyl-tRNA(Gln) + L-glutamine + ATP + H2O = L-glutaminyl-tRNA(Gln) + L-glutamate + ADP + phosphate + H(+). The enzyme catalyses L-aspartyl-tRNA(Asn) + L-glutamine + ATP + H2O = L-asparaginyl-tRNA(Asn) + L-glutamate + ADP + phosphate + 2 H(+). Its function is as follows. Allows the formation of correctly charged Asn-tRNA(Asn) or Gln-tRNA(Gln) through the transamidation of misacylated Asp-tRNA(Asn) or Glu-tRNA(Gln) in organisms which lack either or both of asparaginyl-tRNA or glutaminyl-tRNA synthetases. The reaction takes place in the presence of glutamine and ATP through an activated phospho-Asp-tRNA(Asn) or phospho-Glu-tRNA(Gln). The protein is Aspartyl/glutamyl-tRNA(Asn/Gln) amidotransferase subunit C of Rhodococcus opacus (strain B4).